A 150-amino-acid polypeptide reads, in one-letter code: UPF0178 protein DMR_20710 (150 aa).

Belongs to the UPF0178 family.

This Solidesulfovibrio magneticus (strain ATCC 700980 / DSM 13731 / RS-1) (Desulfovibrio magneticus) protein is UPF0178 protein DMR_20710.